Consider the following 378-residue polypeptide: Ribosomal RNA large subunit methyltransferase G (378 aa).

This sequence belongs to the methyltransferase superfamily. RlmG family.

It is found in the cytoplasm. The enzyme catalyses guanosine(1835) in 23S rRNA + S-adenosyl-L-methionine = N(2)-methylguanosine(1835) in 23S rRNA + S-adenosyl-L-homocysteine + H(+). Functionally, specifically methylates the guanine in position 1835 (m2G1835) of 23S rRNA. This is Ribosomal RNA large subunit methyltransferase G from Salmonella paratyphi A (strain ATCC 9150 / SARB42).